The primary structure comprises 38 residues: Cytochrome b6-f complex subunit 5 (38 aa).

Residues 5-25 (LVLGLVMGLVPITLAGLFVAA) traverse the membrane as a helical segment.

The protein belongs to the PetG family. The 4 large subunits of the cytochrome b6-f complex are cytochrome b6, subunit IV (17 kDa polypeptide, PetD), cytochrome f and the Rieske protein, while the 4 small subunits are PetG, PetL, PetM and PetN. The complex functions as a dimer.

It is found in the cellular thylakoid membrane. Component of the cytochrome b6-f complex, which mediates electron transfer between photosystem II (PSII) and photosystem I (PSI), cyclic electron flow around PSI, and state transitions. PetG is required for either the stability or assembly of the cytochrome b6-f complex. In Gloeothece citriformis (strain PCC 7424) (Cyanothece sp. (strain PCC 7424)), this protein is Cytochrome b6-f complex subunit 5.